Reading from the N-terminus, the 616-residue chain is Dihydroxy-acid dehydratase (616 aa).

Asp-81 serves as a coordination point for Mg(2+). A [2Fe-2S] cluster-binding site is contributed by Cys-122. Residues Asp-123 and Lys-124 each coordinate Mg(2+). An N6-carboxylysine modification is found at Lys-124. Cys-195 is a [2Fe-2S] cluster binding site. Glu-491 lines the Mg(2+) pocket. The active-site Proton acceptor is the Ser-517.

The protein belongs to the IlvD/Edd family. As to quaternary structure, homodimer. The cofactor is [2Fe-2S] cluster. Mg(2+) is required as a cofactor.

The enzyme catalyses (2R)-2,3-dihydroxy-3-methylbutanoate = 3-methyl-2-oxobutanoate + H2O. It carries out the reaction (2R,3R)-2,3-dihydroxy-3-methylpentanoate = (S)-3-methyl-2-oxopentanoate + H2O. It functions in the pathway amino-acid biosynthesis; L-isoleucine biosynthesis; L-isoleucine from 2-oxobutanoate: step 3/4. Its pathway is amino-acid biosynthesis; L-valine biosynthesis; L-valine from pyruvate: step 3/4. In terms of biological role, functions in the biosynthesis of branched-chain amino acids. Catalyzes the dehydration of (2R,3R)-2,3-dihydroxy-3-methylpentanoate (2,3-dihydroxy-3-methylvalerate) into 2-oxo-3-methylpentanoate (2-oxo-3-methylvalerate) and of (2R)-2,3-dihydroxy-3-methylbutanoate (2,3-dihydroxyisovalerate) into 2-oxo-3-methylbutanoate (2-oxoisovalerate), the penultimate precursor to L-isoleucine and L-valine, respectively. This Escherichia coli O127:H6 (strain E2348/69 / EPEC) protein is Dihydroxy-acid dehydratase.